A 711-amino-acid chain; its full sequence is Nuclear intron maturase 1, mitochondrial (711 aa).

Positions 147–459 (KDKISMNGGE…RGIQFLDHII (313 aa)) constitute a Reverse transcriptase domain. The segment at 484-653 (GTLLSVSASL…QVLQEYIRLQ (170 aa)) is intron maturase type-2.

The protein belongs to the plant nuclear intron maturase (nMat) family. As to expression, expressed at low levels in seedlings and accumulates in adult plants.

The protein localises to the mitochondrion. In terms of biological role, nuclear-encoded maturase required for splicing of group-II introns in mitochondria. Necessary for mitochondrial biogenesis during early developmental stages. Involved in the splicing of mitochondrial NAD4 transcripts. Required for trans-splicing of NAD1 intron 1 and also functions in cis-splicing of NAD2 intron 1 and NAD4 intron 2. Required for the regulation of fundamental metabolic pathways such as amino acid metabolism, triacylglycerol degradation and polysaccharide synthesis (cellulose and starch) during the early stage of plant growth. Implicated in stress responses. This chain is Nuclear intron maturase 1, mitochondrial, found in Arabidopsis thaliana (Mouse-ear cress).